Reading from the N-terminus, the 1146-residue chain is MARHDEAKAGGLFDRIGNFVVRWPLIVIGCWIAVAAALTLLLPTLQAQAAKREQAPLPPGAPSMVLQKEMSAAFQEKIETSALLLVLLTNENGLGPADEAVYRKLIENLRADTQDKISVQDFLAVPEMKELLASKDNKAWNLPITFAGDAASPETQAAFKRVAAIVKQTVAGTSLTVHLSGPIATVADLTELGEKDVRIIEIGTAVSVLIILILVYRNLVTMLVPLATIGASVVTAQGTLSGLAEFGLAVNMQAIVFMSAVMIGAGTDYAVFLISRYHDYVRHGEKSDMAVKKALMSIGKVITASAATVAVTFLAMVFTKLEVFSAVGPAIAVAITVSLLGAVTLLPAILTLTGRRGWIKPRRDLTSRMWRRSGVRIVRRSTIHLVGSLIVLVALAGCTLLIRFNYDDLKTVPQHVESVKGYEAMNRHFPMNAMTPMVLFIKSPRDLRTPGALADIEMMSREIAELPNIVMVRGLTRPNGEPLKETKVSFQAGEVGGKLDEATTLLEEHGGELDQLTGGAHQLADALAQIRNEINGAVASSSGIVNTLQAMMDLMGGDKTIRQLENASQYVGRMRALGDNLSGTVTDAEQIATWASPMVNALNSSPVCNSDPACRTSRAQLAAIVQAQDDGLLRSIRALAVTLQQTQEYQTLARTVSTLDGQLKQVVSTLKAVDGLPTKLAQMQQGANALADGSAALAAGVQELVDQVKKMGSGLNEAADFLLGIKRDADKPSMAGFNIPPQIFSRDEFKKGAQIFLSADGHAARYFVQSALNPATTEAMDQVNDILRVADSARPNTELEDATIGLAGVPTALRDIRDYYNSDMKFIVIATIVIVFLILVILLRALVAPIYLIGSVLISYLSALGIGTLVFQLILGQEMHWSLPGLSFILLVAIGADYNMLLISRIRDESPHGIRIGVIRTVGSTGGVITSAGLIFAASMFGLVGASINTMAQAGFTIGIGIVLDTFLVRTVTVPALTTMIGRANWWPSELGRDPSTPPTKADRWLRRVKGHRRKAPIPAPKPPHTKVVRNTNGHASKAATKSVPNGKPADLAEGNGEYLIDHLRRHSLPLFGYAAMPAYDVVDGVSKPNGDGAHIGKEPVDHLLGHSLPLFGLAGLPSYDRWDDTSIGEPAVGHAGSKPDAKLST.

A run of 11 helical transmembrane segments spans residues 25-45 (LIVI…LPTL), 206-226 (VSVL…LVPL), 254-274 (AIVF…VFLI), 298-318 (IGKV…AMVF), 330-350 (AIAV…PAIL), 382-402 (TIHL…TLLI), 826-846 (FIVI…LRAL), 850-870 (IYLI…GTLV), 883-903 (LPGL…MLLI), 928-948 (VITS…GASI), and 949-969 (NTMA…TFLV).

Belongs to the resistance-nodulation-cell division (RND) (TC 2.A.6) family. MmpL subfamily.

The protein resides in the cell membrane. In Mycobacterium tuberculosis (strain CDC 1551 / Oshkosh), this protein is Probable transport protein MmpL12 (mmpL12).